The primary structure comprises 414 residues: Histidine--tRNA ligase (414 aa).

Belongs to the class-II aminoacyl-tRNA synthetase family. In terms of assembly, homodimer.

Its subcellular location is the cytoplasm. The catalysed reaction is tRNA(His) + L-histidine + ATP = L-histidyl-tRNA(His) + AMP + diphosphate + H(+). The protein is Histidine--tRNA ligase of Solibacter usitatus (strain Ellin6076).